The sequence spans 888 residues: CRISPR-associated endonuclease/helicase Cas3 (888 aa).

In terms of domain architecture, HD Cas3-type spans 20 to 231 (KGNDIHLLIY…AGFCSLADWL (212 aa)). Mg(2+) contacts are provided by Asp-75 and His-160. The region spanning 301–504 (DALPVAPGLT…LDTYGLHTDP (204 aa)) is the Helicase ATP-binding domain. Position 314 to 321 (314 to 321 (APTGSGKT)) interacts with ATP. The DEAH box signature appears at 452–455 (DEVH). Residues 556-735 (MLERMIAAAN…AYRQWLDSIY (180 aa)) form the Helicase C-terminal domain.

In the N-terminal section; belongs to the CRISPR-associated nuclease Cas3-HD family. The protein in the central section; belongs to the CRISPR-associated helicase Cas3 family. In terms of assembly, interacts with the CasA subunit of Cascade once Cascade has recognized target DNA. Requires Mg(2+) as cofactor.

Its function is as follows. CRISPR (clustered regularly interspaced short palindromic repeat), is an adaptive immune system that provides protection against mobile genetic elements (viruses, transposable elements and conjugative plasmids). CRISPR clusters contain sequences complementary to antecedent mobile elements and target invading nucleic acids. CRISPR clusters are transcribed and processed into CRISPR RNA (crRNA). Cas3 plus Cascade participate in CRISPR interference, the third stage of CRISPR immunity. In terms of biological role, acts as an endonuclease, a 3'-5'exonuclease, and an ATP-dependent dsDNA helicase. Anneals and unwinds R-loops (in which crRNA binds the target DNA, displacing the noncomplementary strand). Unwinding requires ATP, annealing does not. Required along with the Cascade complex for resistance to bacteriophage lambda infection as well as the ability to cure CRISPR-encoding high-copy number plasmid. A Cas3-CasA fusion protein purified with the Cascade complex nicks target plasmid in the presence but not absence of Mg(2+), and degrades plasmid fully in the presence of Mg(2+) and ATP, suggesting the helicase activity is required for complete degradation. The chain is CRISPR-associated endonuclease/helicase Cas3 (ygcB) from Escherichia coli (strain K12).